A 196-amino-acid polypeptide reads, in one-letter code: Peptidyl-tRNA hydrolase (196 aa).

Residue Tyr-18 coordinates tRNA. The active-site Proton acceptor is His-23. Positions 69, 71, and 117 each coordinate tRNA.

The protein belongs to the PTH family. Monomer.

The protein localises to the cytoplasm. The enzyme catalyses an N-acyl-L-alpha-aminoacyl-tRNA + H2O = an N-acyl-L-amino acid + a tRNA + H(+). Hydrolyzes ribosome-free peptidyl-tRNAs (with 1 or more amino acids incorporated), which drop off the ribosome during protein synthesis, or as a result of ribosome stalling. Functionally, catalyzes the release of premature peptidyl moieties from peptidyl-tRNA molecules trapped in stalled 50S ribosomal subunits, and thus maintains levels of free tRNAs and 50S ribosomes. The chain is Peptidyl-tRNA hydrolase from Marinobacter nauticus (strain ATCC 700491 / DSM 11845 / VT8) (Marinobacter aquaeolei).